Here is a 425-residue protein sequence, read N- to C-terminus: UPF0597 protein VF_0641 (425 aa).

Belongs to the UPF0597 family.

The polypeptide is UPF0597 protein VF_0641 (Aliivibrio fischeri (strain ATCC 700601 / ES114) (Vibrio fischeri)).